We begin with the raw amino-acid sequence, 340 residues long: Dihydroorotate dehydrogenase (quinone) (340 aa).

FMN is bound by residues 65–69 (AGADK) and threonine 89. Lysine 69 is a substrate binding site. Substrate is bound at residue 114–118 (NRNGF). FMN contacts are provided by asparagine 142 and asparagine 175. Asparagine 175 contributes to the substrate binding site. The active-site Nucleophile is serine 178. Residue asparagine 180 coordinates substrate. 2 residues coordinate FMN: lysine 220 and threonine 248. Position 249–250 (249–250 (NT)) interacts with substrate. FMN is bound by residues glycine 271, glycine 300, and 321–322 (YS).

The protein belongs to the dihydroorotate dehydrogenase family. Type 2 subfamily. Monomer. FMN serves as cofactor.

It localises to the cell membrane. It catalyses the reaction (S)-dihydroorotate + a quinone = orotate + a quinol. It participates in pyrimidine metabolism; UMP biosynthesis via de novo pathway; orotate from (S)-dihydroorotate (quinone route): step 1/1. Its function is as follows. Catalyzes the conversion of dihydroorotate to orotate with quinone as electron acceptor. In Actinobacillus succinogenes (strain ATCC 55618 / DSM 22257 / CCUG 43843 / 130Z), this protein is Dihydroorotate dehydrogenase (quinone).